We begin with the raw amino-acid sequence, 164 residues long: Phosphopantetheine adenylyltransferase (164 aa).

Substrate is bound at residue serine 10. Residues 10 to 11 (SF) and histidine 18 contribute to the ATP site. Residues lysine 42, methionine 74, and arginine 88 each contribute to the substrate site. ATP-binding positions include 89–91 (GLR), glutamate 99, and 124–130 (YFFVSAR).

Belongs to the bacterial CoaD family. As to quaternary structure, homohexamer. Mg(2+) is required as a cofactor.

Its subcellular location is the cytoplasm. The enzyme catalyses (R)-4'-phosphopantetheine + ATP + H(+) = 3'-dephospho-CoA + diphosphate. Its pathway is cofactor biosynthesis; coenzyme A biosynthesis; CoA from (R)-pantothenate: step 4/5. Reversibly transfers an adenylyl group from ATP to 4'-phosphopantetheine, yielding dephospho-CoA (dPCoA) and pyrophosphate. The polypeptide is Phosphopantetheine adenylyltransferase (Anaeromyxobacter dehalogenans (strain 2CP-1 / ATCC BAA-258)).